The following is a 107-amino-acid chain: U1-lycotoxin-Ls1b (107 aa).

Positions 1-20 (MMKALVVVALLVTLISYSSS) are cleaved as a signal peptide. A propeptide spanning residues 21–41 (EGIDDLEADELLSLMANEQTR) is cleaved from the precursor. 4 cysteine pairs are disulfide-bonded: C44–C59, C51–C68, C58–C86, and C70–C84.

The protein belongs to the neurotoxin 19 (CSTX) family. 04 (U1-Lctx) subfamily. Expressed by the venom gland.

It localises to the secreted. The protein is U1-lycotoxin-Ls1b of Lycosa singoriensis (Wolf spider).